The sequence spans 484 residues: Signal transduction histidine-protein kinase/phosphatase MprB (484 aa).

Over residues 1-10 (MAADNAGRWP) the composition is skewed to low complexity. The tract at residues 1–23 (MAADNAGRWPGQPPGPPAPTHPA) is disordered. The Cytoplasmic portion of the chain corresponds to 1–31 (MAADNAGRWPGQPPGPPAPTHPASSVSLRWR). Pro residues predominate over residues 11–20 (GQPPGPPAPT). The helical transmembrane segment at 32 to 52 (VMLLAMSMVVISVVLMAVAVF) threads the bilayer. Over 53–172 (AVTSRALYDD…TGKVLKRLGT (120 aa)) the chain is Extracellular. Residues 173 to 193 (VLLIVGGLGVAVAAIAGGMVA) form a helical membrane-spanning segment. The 53-residue stretch at 194 to 246 (SAGLRPVGRLTQAAERVARTDDLRPIPVIGNDELARLTETFNMMLRALAESRE) folds into the HAMP domain. Residues 194–484 (SAGLRPVGRL…SPAGSDEAER (291 aa)) lie on the Cytoplasmic side of the membrane. In terms of domain architecture, Histidine kinase spans 254-474 (DAGHELRTPL…AMHVVLPGRP (221 aa)). Histidine 257 is subject to Phosphohistidine; by autocatalysis.

The cofactor is Mg(2+). Requires Mn(2+) as cofactor. Post-translationally, autophosphorylated.

It is found in the cell membrane. The catalysed reaction is ATP + protein L-histidine = ADP + protein N-phospho-L-histidine.. Its function is as follows. Member of the two-component regulatory system MprB/MprA which contributes to maintaining a balance among several systems involved in stress resistance and is required for establishment and maintenance of persistent infection in the host. In response to environmental signals MprB acts both as a membrane-associated protein kinase that undergoes autophosphorylation and subsequently transfers the phosphate to MprA, and a protein phosphatase that dephosphorylates phospho-MprA. The chain is Signal transduction histidine-protein kinase/phosphatase MprB (mprB) from Mycolicibacterium vanbaalenii (strain DSM 7251 / JCM 13017 / BCRC 16820 / KCTC 9966 / NRRL B-24157 / PYR-1) (Mycobacterium vanbaalenii).